The following is a 492-amino-acid chain: Phenylalanine--tRNA ligase alpha subunit (492 aa).

Residues Thr-335, 374-376, and Tyr-414 contribute to the L-phenylalanine site; that span reads QLE. Position 416 (Glu-416) interacts with Mg(2+). Phe-439 is a binding site for L-phenylalanine.

It belongs to the class-II aminoacyl-tRNA synthetase family. Phe-tRNA synthetase alpha subunit type 2 subfamily. Tetramer of two alpha and two beta subunits. Requires Mg(2+) as cofactor.

It localises to the cytoplasm. It carries out the reaction tRNA(Phe) + L-phenylalanine + ATP = L-phenylalanyl-tRNA(Phe) + AMP + diphosphate + H(+). This Methanosarcina acetivorans (strain ATCC 35395 / DSM 2834 / JCM 12185 / C2A) protein is Phenylalanine--tRNA ligase alpha subunit.